Reading from the N-terminus, the 564-residue chain is Arginine--tRNA ligase (564 aa).

The 'HIGH' region signature appears at 122 to 132 (PNIAKPFSIGH).

This sequence belongs to the class-I aminoacyl-tRNA synthetase family. Monomer.

It is found in the cytoplasm. The catalysed reaction is tRNA(Arg) + L-arginine + ATP = L-arginyl-tRNA(Arg) + AMP + diphosphate. The sequence is that of Arginine--tRNA ligase from Lactococcus lactis subsp. cremoris (strain MG1363).